The primary structure comprises 154 residues: PTTG1IP family member 2 (154 aa).

The first 26 residues, 1 to 26 (MCWLRAWGQILLPVFLSLFLIQLLIS), serve as a signal peptide directing secretion. Residues 27–97 (FSENGFIHSP…SIYWLNCKVD (71 aa)) are Extracellular-facing. Residues 98 to 118 (MFGIMMLLLIAVLITGFVWYC) traverse the membrane as a helical segment. The Cytoplasmic portion of the chain corresponds to 119-154 (CAYHFYLQDLNRNRVYFYGRRETVPIHDRSATVYDE).

The protein localises to the membrane. This Homo sapiens (Human) protein is PTTG1IP family member 2.